Reading from the N-terminus, the 176-residue chain is Cytochrome b (176 aa).

3 helical membrane-spanning segments follow: residues 33 to 53 (FGSL…FLAM), 77 to 98 (WLLR…YLHI), and 113 to 133 (WNVG…GYVL). Heme b-binding residues include histidine 83 and histidine 97.

This sequence belongs to the cytochrome b family. In terms of assembly, the cytochrome bc1 complex contains 11 subunits: 3 respiratory subunits (MT-CYB, CYC1 and UQCRFS1), 2 core proteins (UQCRC1 and UQCRC2) and 6 low-molecular weight proteins (UQCRH/QCR6, UQCRB/QCR7, UQCRQ/QCR8, UQCR10/QCR9, UQCR11/QCR10 and a cleavage product of UQCRFS1). This cytochrome bc1 complex then forms a dimer. Requires heme b as cofactor.

It is found in the mitochondrion inner membrane. In terms of biological role, component of the ubiquinol-cytochrome c reductase complex (complex III or cytochrome b-c1 complex) that is part of the mitochondrial respiratory chain. The b-c1 complex mediates electron transfer from ubiquinol to cytochrome c. Contributes to the generation of a proton gradient across the mitochondrial membrane that is then used for ATP synthesis. This chain is Cytochrome b (MT-CYB), found in Eumops perotis (Western bonneted bat).